The following is a 284-amino-acid chain: L-ribulose-5-phosphate 3-epimerase UlaE (284 aa).

This sequence belongs to the L-ribulose-5-phosphate 3-epimerase family.

The catalysed reaction is L-ribulose 5-phosphate = L-xylulose 5-phosphate. Its pathway is cofactor degradation; L-ascorbate degradation; D-xylulose 5-phosphate from L-ascorbate: step 3/4. In terms of biological role, catalyzes the isomerization of L-xylulose-5-phosphate to L-ribulose-5-phosphate. Is involved in the anaerobic L-ascorbate utilization. This chain is L-ribulose-5-phosphate 3-epimerase UlaE, found in Salmonella heidelberg (strain SL476).